Reading from the N-terminus, the 1755-residue chain is BCL-6 corepressor (1755 aa).

Residues 309–345 (NSKQPRVPSAKAVTSGLPGDTALLLPPSPRPSPRVHL) form a disordered region. Phosphoserine is present on residues S336, S340, S365, and S367. Residues 388 to 438 (LSNGKYPKAPEGGEGAQPVPGHARKTAVQDRKDGSSPPLLEKQTVTKDVTD) form a disordered region. The residue at position 392 (K392) is an N6-acetyllysine. Phosphoserine is present on S423. An interaction with BCL6 region spans residues 498-514 (RSEIISTAPSSWVVPGP). Over residues 557-578 (VSGSVSSAGRPASASPAPNANA) the composition is skewed to low complexity. Disordered stretches follow at residues 557–641 (VSGS…IFLS), 737–760 (ITKE…DPTL), 773–794 (TKLH…WNQG), and 815–844 (AKTD…SVEP). Positions 580–594 (GTKTSRSSVETTPSV) are enriched in polar residues. The segment covering 605 to 620 (PAKHSSSTSSKGAKAS) has biased composition (low complexity). Residues 775-785 (LHPDVPTDKNL) are compositionally biased toward basic and acidic residues. A Glycyl lysine isopeptide (Lys-Gly) (interchain with G-Cter in SUMO2) cross-link involves residue K786. A Glycyl lysine isopeptide (Lys-Gly) (interchain with G-Cter in SUMO2) cross-link involves residue K872. Disordered stretches follow at residues 1071–1187 (IAEQ…EDPH) and 1220–1328 (QQVS…KENQ). The segment covering 1076 to 1107 (ESERCEYSVGNKHRDPFEAPEDKDLPVEKYFV) has biased composition (basic and acidic residues). A phosphoserine mark is found at S1127 and S1139. A compositionally biased stretch (basic and acidic residues) spans 1166-1175 (SKDDWPEREM). Residues 1238 to 1252 (TQATQPEAIPQGTNI) show a composition bias toward polar residues. The span at 1253 to 1279 (TEEKPGRKRAEAKGNRSWSEESLKPSD) shows a compositional bias: basic and acidic residues. K1256 is covalently cross-linked (Glycyl lysine isopeptide (Lys-Gly) (interchain with G-Cter in SUMO2)). Phosphoserine occurs at positions 1290, 1345, and 1410. K1413 participates in a covalent cross-link: Glycyl lysine isopeptide (Lys-Gly) (interchain with G-Cter in SUMO2). Polar residues predominate over residues 1430–1447 (QSTQLPCSSSPQETTQSR). Positions 1430–1451 (QSTQLPCSSSPQETTQSRPMPP) are disordered. 3 ANK repeats span residues 1462–1495 (AGET…HRDN), 1496–1525 (AGYC…DVNC), and 1529–1558 (DGTR…DPTL). The segment at 1634 to 1748 (SDVFEFEFSE…SSVEWLHPSD (115 aa)) is necessary and sufficient for interaction with PCGF1.

This sequence belongs to the BCOR family. In terms of assembly, interacts with BCL6; the interaction is direct. Forms ternary complexes with BCL6 and SMRT/NCOR2 on selected target genes promoters; potently repress expression. Can interact with HDAC1, HDAC3 and HDAC5. Interacts with PCGF1; the interaction is direct. Interacts with KDM2B. Component of an approximately 800 kDa repressive BCOR complex at least composed of BCOR, RYBP, PCGF1, RING1, RNF2/RING2, KDM2B and SKP1. Interacts with CPNE4 (via VWFA domain). Isoform 1 may interact with MLLT3/AF9. Ubiquitously expressed.

The protein resides in the nucleus. In terms of biological role, transcriptional corepressor. May specifically inhibit gene expression when recruited to promoter regions by sequence-specific DNA-binding proteins such as BCL6 and MLLT3. This repression may be mediated at least in part by histone deacetylase activities which can associate with this corepressor. Involved in the repression of TFAP2A; impairs binding of BCL6 and KDM2B to TFAP2A promoter regions. Via repression of TFAP2A acts as a negative regulator of osteo-dentiogenic capacity in adult stem cells; the function implies inhibition of methylation on histone H3 'Lys-4' (H3K4me3) and 'Lys-36' (H3K36me2). This chain is BCL-6 corepressor (BCOR), found in Homo sapiens (Human).